The sequence spans 229 residues: Uracil-DNA glycosylase (229 aa).

Catalysis depends on Asp-70, which acts as the Proton acceptor.

The protein belongs to the uracil-DNA glycosylase (UDG) superfamily. UNG family.

Its subcellular location is the cytoplasm. The catalysed reaction is Hydrolyzes single-stranded DNA or mismatched double-stranded DNA and polynucleotides, releasing free uracil.. In terms of biological role, excises uracil residues from the DNA which can arise as a result of misincorporation of dUMP residues by DNA polymerase or due to deamination of cytosine. The chain is Uracil-DNA glycosylase from Chlamydia trachomatis serovar L2b (strain UCH-1/proctitis).